The sequence spans 66 residues: uncharacterized protein (66 aa).

This is an uncharacterized protein from Escherichia coli O157:H7.